We begin with the raw amino-acid sequence, 56 residues long: U-limacoditoxin(3)-Dv21 (56 aa).

Residues Met1–Ser19 form the signal peptide. Disulfide bonds link Cys26-Cys41, Cys33-Cys46, and Cys40-Cys53.

The protein belongs to the limacoditoxin-22 family. As to expression, expressed by the venom secretory cell of the spine. The spine is a cuticular structure containing a single large nucleated venom-secreting cell at its base. It is an independent unit capable of producing, storing and injecting venom. On the back of D.vulnerans caterpillars, spines are grouped together by 50 to 100 to form scoli, of which there are eight in D.vulnerans.

It localises to the secreted. Probable toxin. Shows a moderate antiparasitic activity against the major pathogenic nematode of ruminants (H.contortus, IC(50)=22.1 uM). Does not show insecticidal activities. Does not induce increase in intracellular calcium in mouse DRG neurons, suggesting that it does not induce pain. This is U-limacoditoxin(3)-Dv21 from Doratifera vulnerans (Mottled cup moth).